The following is a 306-amino-acid chain: Isoaspartyl peptidase/L-asparaginase (306 aa).

Thr-174 functions as the Nucleophile in the catalytic mechanism. Substrate contacts are provided by residues 202–205 and 224–227; these read RIGD and TGKG.

This sequence belongs to the Ntn-hydrolase family. In terms of assembly, heterotetramer of two alpha and two beta chains arranged as a dimer of alpha/beta heterodimers. Post-translationally, cleaved into an alpha and beta chain by autocatalysis; this activates the enzyme. The N-terminal residue of the beta subunit is responsible for the nucleophile hydrolase activity. As to expression, developing seeds.

It carries out the reaction Cleavage of a beta-linked Asp residue from the N-terminus of a polypeptide.. In terms of biological role, degrades proteins damaged by L-isoaspartyl residue formation (also known as beta-Asp residues). Also has L-asparaginase activity, which is used to liberate stored nitrogen during seed development. This chain is Isoaspartyl peptidase/L-asparaginase, found in Lupinus arboreus (Tree lupine).